Reading from the N-terminus, the 115-residue chain is Large ribosomal subunit protein uL24 (115 aa).

2 disordered regions span residues 45 to 77 and 96 to 115; these read VRQS…STGK and KASG…KAAS.

This sequence belongs to the universal ribosomal protein uL24 family. As to quaternary structure, part of the 50S ribosomal subunit.

Its function is as follows. One of two assembly initiator proteins, it binds directly to the 5'-end of the 23S rRNA, where it nucleates assembly of the 50S subunit. Functionally, one of the proteins that surrounds the polypeptide exit tunnel on the outside of the subunit. This is Large ribosomal subunit protein uL24 from Rhodopirellula baltica (strain DSM 10527 / NCIMB 13988 / SH1).